Reading from the N-terminus, the 269-residue chain is 3-methyl-2-oxobutanoate hydroxymethyltransferase (269 aa).

Residues Asp-50 and Asp-89 each contribute to the Mg(2+) site. Residues Asp-50 to Ser-51, Asp-89, and Lys-119 contribute to the 3-methyl-2-oxobutanoate site. Glu-121 is a binding site for Mg(2+). The active-site Proton acceptor is the Glu-187.

It belongs to the PanB family. In terms of assembly, homodecamer; pentamer of dimers. Requires Mg(2+) as cofactor.

Its subcellular location is the cytoplasm. It catalyses the reaction 3-methyl-2-oxobutanoate + (6R)-5,10-methylene-5,6,7,8-tetrahydrofolate + H2O = 2-dehydropantoate + (6S)-5,6,7,8-tetrahydrofolate. It functions in the pathway cofactor biosynthesis; (R)-pantothenate biosynthesis; (R)-pantoate from 3-methyl-2-oxobutanoate: step 1/2. In terms of biological role, catalyzes the reversible reaction in which hydroxymethyl group from 5,10-methylenetetrahydrofolate is transferred onto alpha-ketoisovalerate to form ketopantoate. The polypeptide is 3-methyl-2-oxobutanoate hydroxymethyltransferase (panB) (Corynebacterium glutamicum (strain ATCC 13032 / DSM 20300 / JCM 1318 / BCRC 11384 / CCUG 27702 / LMG 3730 / NBRC 12168 / NCIMB 10025 / NRRL B-2784 / 534)).